The chain runs to 2523 residues: uncharacterized protein (2523 aa).

The protein belongs to the mycobacterial PPE family.

In terms of biological role, probably plays a role in host phagosome maturation arrest. This is an uncharacterized protein from Mycobacterium tuberculosis (strain ATCC 25618 / H37Rv).